A 172-amino-acid polypeptide reads, in one-letter code: Large ribosomal subunit protein uL10 (172 aa).

Belongs to the universal ribosomal protein uL10 family. As to quaternary structure, part of the ribosomal stalk of the 50S ribosomal subunit. The N-terminus interacts with L11 and the large rRNA to form the base of the stalk. The C-terminus forms an elongated spine to which 3 L12 dimers bind in a sequential fashion forming a heptameric L10(L12)2(L12)2(L12)2 complex.

Its function is as follows. Forms part of the ribosomal stalk, playing a central role in the interaction of the ribosome with GTP-bound translation factors. This Agrobacterium fabrum (strain C58 / ATCC 33970) (Agrobacterium tumefaciens (strain C58)) protein is Large ribosomal subunit protein uL10.